The primary structure comprises 370 residues: Vasopressin V2 receptor (370 aa).

Over residues 1–21 (MFMASTTSAVPWHLSQPTPAG) the composition is skewed to polar residues. The disordered stretch occupies residues 1-26 (MFMASTTSAVPWHLSQPTPAGNGSEG). The Extracellular portion of the chain corresponds to 1 to 38 (MFMASTTSAVPWHLSQPTPAGNGSEGELLTARDPLLAQ). Asn-22 is a glycosylation site (N-linked (GlcNAc...) asparagine). Residues 39–63 (AELALLSTVFVAVALSNGLVLGALV) form a helical membrane-spanning segment. Residues 64-77 (RRGRRGRWAPMHVF) lie on the Cytoplasmic side of the membrane. Residues 78 to 98 (IGHLCLADLAVALFQVLPQLA) form a helical membrane-spanning segment. Topologically, residues 99-113 (WDATDRFRGPDALCR) are extracellular. The helical transmembrane segment at 114–135 (AVKYLQMVGMYASSYMILAMTL) threads the bilayer. Residues 136–159 (DRHRAICRPMLAHRHGGGTHWNRP) are Cytoplasmic-facing. A helical transmembrane segment spans residues 160–180 (VLLAWAFSLLFSLPQLFIFAQ). Topologically, residues 181–199 (RDVDGSGVLDCWARFAEPW) are extracellular. A helical membrane pass occupies residues 200 to 219 (GLRAYVTWIALMVFVAPALG). Residues 220-270 (IAACQVLIFREIHASLGPGPVPRAGGPRRGCRPGSPAEGARVSAAVAKTVK) are Cytoplasmic-facing. A helical transmembrane segment spans residues 271–292 (MTLVIVIVYVLCWAPFFLVQLW). At 293–307 (AAWDPEAPREGPPFV) the chain is on the extracellular side. The helical transmembrane segment at 308–327 (LLMLLASLNSCTNPWIYASF) threads the bilayer. The Cytoplasmic portion of the chain corresponds to 328–370 (SSSISSELRSLLCCTWRRAPPSPGPQEESCATASSFLAKDTPS). Residues Cys-340 and Cys-341 are each lipidated (S-palmitoyl cysteine). Residues 347 to 370 (PPSPGPQEESCATASSFLAKDTPS) form a disordered region.

It belongs to the G-protein coupled receptor 1 family. Vasopressin/oxytocin receptor subfamily. In terms of assembly, interacts with ARRDC4. Identified in a complex containing at least ARRDC4, V2R and HGS. Interacts with TMEM147.

It is found in the cell membrane. In terms of biological role, receptor for arginine vasopressin. The activity of this receptor is mediated by G proteins which activate adenylate cyclase. Involved in renal water reabsorption. The protein is Vasopressin V2 receptor (AVPR2) of Bos taurus (Bovine).